We begin with the raw amino-acid sequence, 197 residues long: Holliday junction resolvase RecU (197 aa).

Mg(2+) contacts are provided by threonine 82, aspartate 84, glutamate 97, and glutamine 116.

This sequence belongs to the RecU family. Mg(2+) is required as a cofactor.

Its subcellular location is the cytoplasm. It catalyses the reaction Endonucleolytic cleavage at a junction such as a reciprocal single-stranded crossover between two homologous DNA duplexes (Holliday junction).. Endonuclease that resolves Holliday junction intermediates in genetic recombination. Cleaves mobile four-strand junctions by introducing symmetrical nicks in paired strands. Promotes annealing of linear ssDNA with homologous dsDNA. Required for DNA repair, homologous recombination and chromosome segregation. This Streptococcus mutans serotype c (strain ATCC 700610 / UA159) protein is Holliday junction resolvase RecU.